The sequence spans 691 residues: Elongation factor G (691 aa).

The 275-residue stretch at 8–282 (ERVRNIGIAA…AVVNYLPAPV (275 aa)) folds into the tr-type G domain. GTP-binding positions include 17–24 (AHIDAGKT), 81–85 (DTPGH), and 135–138 (NKMD).

It belongs to the TRAFAC class translation factor GTPase superfamily. Classic translation factor GTPase family. EF-G/EF-2 subfamily.

The protein resides in the cytoplasm. In terms of biological role, catalyzes the GTP-dependent ribosomal translocation step during translation elongation. During this step, the ribosome changes from the pre-translocational (PRE) to the post-translocational (POST) state as the newly formed A-site-bound peptidyl-tRNA and P-site-bound deacylated tRNA move to the P and E sites, respectively. Catalyzes the coordinated movement of the two tRNA molecules, the mRNA and conformational changes in the ribosome. The polypeptide is Elongation factor G (Prochlorococcus marinus (strain NATL2A)).